We begin with the raw amino-acid sequence, 489 residues long: Calcium uptake protein 1, mitochondrial (489 aa).

Residues 1–34 (MYRLRALTAATVGMVQLTRRHHTGAFRSYQRRRL) constitute a mitochondrion transit peptide. The disordered stretch occupies residues 62-109 (SSVKHEEQMREEEPLKDVAEEAESDGALESSSGEDEDEAGSEEKKKKQ). The span at 64–80 (VKHEEQMREEEPLKDVA) shows a compositional bias: basic and acidic residues. Residues 81–101 (EEAESDGALESSSGEDEDEAG) are compositionally biased toward acidic residues. The interval 106–117 (KKKQRIGFRDRK) is polybasic region. The tract at residues 133–136 (KIFR) is k/R-ring. One can recognise an EF-hand 1 domain in the interval 229-264 (TPQRNFEIAFKMFDLNGDGEVDLEEFEQVQSIIRSQ). Ca(2+) is bound by residues D242, N244, D246, E248, and E253. The k/R-ring stretch occupies residues 270–274 (RHRDR). EF-hand domains are found at residues 371–386 (ITFE…LKNV) and 420–455 (LSDH…RLMR). Ca(2+)-binding residues include D433, D435, N437, E439, and E444. Residues 467-477 (RLVRAMWKCAQ) form a C-helix region region.

Belongs to the MICU1 family. MICU1 subfamily. As to quaternary structure, heterodimer; disulfide-linked; heterodimerizes with micu2. Component of the uniplex complex.

The protein localises to the mitochondrion intermembrane space. It localises to the mitochondrion inner membrane. In terms of biological role, calcium sensor of the mitochondrial calcium uniporter (mcu) channel, which senses calcium level via its EF-hand domains. micu1 and micu2 form a disulfide-linked heterodimer that stimulates and inhibits MCU activity, depending on the concentration of calcium. At low calcium levels, micu1 occludes the pore of the MCU channel, preventing mitochondrial calcium uptake. At higher calcium levels, calcium-binding to micu1 and micu2 induces a conformational change that weakens mcu-micu1 interactions and moves the micu1-micu2 heterodimer away from the pore, allowing calcium permeation through the mcu channel. Also required to protect against manganese toxicity by preventing manganese uptake by mcu. This is Calcium uptake protein 1, mitochondrial (micu1) from Danio rerio (Zebrafish).